We begin with the raw amino-acid sequence, 611 residues long: Chaperone protein DnaK (611 aa).

Thr173 carries the post-translational modification Phosphothreonine; by autocatalysis. Over residues 579–592 (AAGQAEGAQGAQDA) the composition is skewed to low complexity. Residues 579–598 (AAGQAEGAQGAQDAGAKKDN) form a disordered region.

The protein belongs to the heat shock protein 70 family.

Acts as a chaperone. The polypeptide is Chaperone protein DnaK (Bacillus cereus (strain ATCC 10987 / NRS 248)).